We begin with the raw amino-acid sequence, 528 residues long: GMP synthase [glutamine-hydrolyzing] (528 aa).

The Glutamine amidotransferase type-1 domain occupies 13–203 (TVLVVDFGAQ…LYEAAGCRPT (191 aa)). The active-site Nucleophile is the Cys90. Active-site residues include His177 and Glu179. A GMPS ATP-PPase domain is found at 204-402 (WTMVNIVEDQ…LGLPAEMVWR (199 aa)). 231–237 (SGGVDSA) contacts ATP.

As to quaternary structure, homodimer.

The catalysed reaction is XMP + L-glutamine + ATP + H2O = GMP + L-glutamate + AMP + diphosphate + 2 H(+). It functions in the pathway purine metabolism; GMP biosynthesis; GMP from XMP (L-Gln route): step 1/1. Its function is as follows. Catalyzes the synthesis of GMP from XMP. In Thermobifida fusca (strain YX), this protein is GMP synthase [glutamine-hydrolyzing].